Reading from the N-terminus, the 547-residue chain is bZIP transcription factor 29 (547 aa).

Disordered stretches follow at residues methionine 1–glutamate 199, asparagine 244–proline 312, and glycine 333–valine 356. The span at leucine 15 to phenylalanine 52 shows a compositional bias: polar residues. A compositionally biased stretch (pro residues) spans proline 63–serine 73. A compositionally biased stretch (polar residues) spans proline 74 to phenylalanine 89. Residues phenylalanine 120–serine 132 show a composition bias toward basic and acidic residues. Positions valine 134–leucine 157 are enriched in polar residues. Residues aspartate 249 to serine 263 are compositionally biased toward basic and acidic residues. A compositionally biased stretch (polar residues) spans serine 264 to aspartate 275. The segment covering glutamate 279 to serine 294 has biased composition (low complexity). Polar residues predominate over residues glycine 344–valine 356. Residues aspartate 394 to leucine 457 form the bZIP domain. The basic motif stretch occupies residues lysine 396–arginine 417. Residues methionine 416 to arginine 469 are a coiled coil. The segment at leucine 422 to leucine 457 is leucine-zipper. The segment covering glutamine 517–glutamine 535 has biased composition (low complexity). The interval glutamine 517–glutamate 547 is disordered. A compositionally biased stretch (polar residues) spans asparagine 536–glutamate 547.

In terms of assembly, forms homodimers. In terms of tissue distribution, expressed in roots, leaves and flowers. Expressed in the root tips, lateral root primordia, and guard cells of leaves, hypocotyls and anthers.

The protein resides in the cytoplasm. It is found in the nucleus. Functionally, transcription factor that acts as a repressor of reproductive development, meristem size and plant growth. Regulates meristem size, cell size and cell number during plant development. Binds to the promoters of the cell cycle regulators CYCB1-2 and SMR4, and genes involved in cell wall organization, such as XTH9, EXPA1 and EXPA3. Possesses transactivation activity in yeast. Possesses transactivation activity in plant protoplasts. Plays a role in abiotic stress response by binding to the 5'-CAGCTG-3' DNA sequence found in the promoters of MYB44 and TRX8. Plays a role in osmosensory response by binding to the 5'-AGCTGT/G-3' DNA sequence found in the promoters of the hypoosmolarity-responsive genes CYP707A1 and CYP707A3. Binds to the 5'-AGCTGT-3' DNA sequence found in the promoter of the ZAT1 gene in response to abiotic stresses, such as oxidative stress, high-light, osmotic shock, salt and heat stresses. The polypeptide is bZIP transcription factor 29 (Arabidopsis thaliana (Mouse-ear cress)).